A 232-amino-acid polypeptide reads, in one-letter code: Sugar fermentation stimulation protein homolog (232 aa).

This sequence belongs to the SfsA family.

This is Sugar fermentation stimulation protein homolog from Ruegeria sp. (strain TM1040) (Silicibacter sp.).